The following is a 90-amino-acid chain: Small ribosomal subunit protein uS15 (90 aa).

Belongs to the universal ribosomal protein uS15 family. In terms of assembly, part of the 30S ribosomal subunit. Forms a bridge to the 50S subunit in the 70S ribosome, contacting the 23S rRNA.

One of the primary rRNA binding proteins, it binds directly to 16S rRNA where it helps nucleate assembly of the platform of the 30S subunit by binding and bridging several RNA helices of the 16S rRNA. In terms of biological role, forms an intersubunit bridge (bridge B4) with the 23S rRNA of the 50S subunit in the ribosome. The sequence is that of Small ribosomal subunit protein uS15 from Campylobacter jejuni subsp. doylei (strain ATCC BAA-1458 / RM4099 / 269.97).